A 460-amino-acid polypeptide reads, in one-letter code: tRNA modification GTPase MnmE (460 aa).

(6S)-5-formyl-5,6,7,8-tetrahydrofolate-binding residues include arginine 22, glutamate 87, and arginine 126. A TrmE-type G domain is found at 222 to 381; the sequence is GLKTAIIGKP…LENTIYNLVF (160 aa). Asparagine 232 lines the K(+) pocket. GTP-binding positions include 232-237, 251-257, and 276-279; these read NVGKSS, TDIPGTT, and DTAG. Serine 236 lines the Mg(2+) pocket. K(+) contacts are provided by threonine 251, isoleucine 253, and threonine 256. Threonine 257 contacts Mg(2+). Position 460 (lysine 460) interacts with (6S)-5-formyl-5,6,7,8-tetrahydrofolate.

The protein belongs to the TRAFAC class TrmE-Era-EngA-EngB-Septin-like GTPase superfamily. TrmE GTPase family. Homodimer. Heterotetramer of two MnmE and two MnmG subunits. It depends on K(+) as a cofactor.

The protein resides in the cytoplasm. In terms of biological role, exhibits a very high intrinsic GTPase hydrolysis rate. Involved in the addition of a carboxymethylaminomethyl (cmnm) group at the wobble position (U34) of certain tRNAs, forming tRNA-cmnm(5)s(2)U34. This chain is tRNA modification GTPase MnmE, found in Thermoanaerobacter sp. (strain X514).